We begin with the raw amino-acid sequence, 398 residues long: Phosphoglycerate kinase (398 aa).

Substrate is bound by residues 20–22, arginine 35, 58–61, arginine 118, and arginine 155; these read DFN and HLGK. ATP is bound by residues lysine 208, glycine 296, glutamate 327, and 354–357; that span reads GGDS.

This sequence belongs to the phosphoglycerate kinase family. In terms of assembly, monomer.

The protein resides in the cytoplasm. The enzyme catalyses (2R)-3-phosphoglycerate + ATP = (2R)-3-phospho-glyceroyl phosphate + ADP. Its pathway is carbohydrate degradation; glycolysis; pyruvate from D-glyceraldehyde 3-phosphate: step 2/5. This is Phosphoglycerate kinase from Fusobacterium nucleatum subsp. nucleatum (strain ATCC 25586 / DSM 15643 / BCRC 10681 / CIP 101130 / JCM 8532 / KCTC 2640 / LMG 13131 / VPI 4355).